Consider the following 280-residue polypeptide: Hydroxyethylthiazole kinase (280 aa).

M50 is a binding site for substrate. 2 residues coordinate ATP: K125 and T178. A substrate-binding site is contributed by G205.

This sequence belongs to the Thz kinase family. The cofactor is Mg(2+).

It catalyses the reaction 5-(2-hydroxyethyl)-4-methylthiazole + ATP = 4-methyl-5-(2-phosphooxyethyl)-thiazole + ADP + H(+). The protein operates within cofactor biosynthesis; thiamine diphosphate biosynthesis; 4-methyl-5-(2-phosphoethyl)-thiazole from 5-(2-hydroxyethyl)-4-methylthiazole: step 1/1. Catalyzes the phosphorylation of the hydroxyl group of 4-methyl-5-beta-hydroxyethylthiazole (THZ). This Lacticaseibacillus paracasei (strain ATCC 334 / BCRC 17002 / CCUG 31169 / CIP 107868 / KCTC 3260 / NRRL B-441) (Lactobacillus paracasei) protein is Hydroxyethylthiazole kinase.